A 497-amino-acid chain; its full sequence is MGAIMVVGTTSHAGKSIMAAVICRMLKRKGYQVTPFKGQNMALNAYVTNAGDEIGHAQAVQAWAAGLEPRVEMNPILLKPQGDMTSQVILNGKAVGRTQAADYYRDYFDRGWQAITTALVTLQQEFDWIVCEGAGSPAEINLKHRDLTNMRVAKHLNAPTLLVADIDRGGVFAHIVGTLELLDPDERALIKGFVINKFRGQRSLLESGITWLEERTGIPVVGVIPWLEHSLPAEDSLDLFERRRTKPNAEVTIAVIRLPRISNFTDFDPLEAEPSVRLQFVGPNQPLGQPDAVIVPGSKTTISDLQQLQVSSMADQLRAYSQAGGMVLGICGGLQMLGQTISDPMGTEGPPGEFAGLGLLPLQTTMSGDKITRQRQAQITLPSDCSALGEDARTIQGYEIHQGQTQVLQPEAVQAWFDDPALGVVSCNHRILGTYLHGIFNNGPWRRVWLNQLRAQKNLLPLPLAIPNYKVYRDHMLDQVTDAIAPYLNLQPFLGKA.

One can recognise a GATase cobBQ-type domain in the interval 250–445; it reads EVTIAVIRLP…LHGIFNNGPW (196 aa). The active-site Nucleophile is C331. H437 is a catalytic residue.

This sequence belongs to the CobB/CobQ family. CobQ subfamily.

Its pathway is cofactor biosynthesis; adenosylcobalamin biosynthesis. Functionally, catalyzes amidations at positions B, D, E, and G on adenosylcobyrinic A,C-diamide. NH(2) groups are provided by glutamine, and one molecule of ATP is hydrogenolyzed for each amidation. The protein is Cobyric acid synthase of Acaryochloris marina (strain MBIC 11017).